We begin with the raw amino-acid sequence, 1133 residues long: Fas-binding factor 1 (1133 aa).

Disordered stretches follow at residues 89-198 and 211-544; these read LGLK…TPIR and IMAT…VPVQ. The segment covering 102–113 has biased composition (basic and acidic residues); sequence AAKDPGKGELPN. Positions 125–134 are enriched in low complexity; it reads KKSLPSPSSS. S142 is modified (phosphoserine). The span at 165 to 182 shows a compositional bias: polar residues; that stretch reads PPVTQSKTASDKSPSTVR. 2 stretches are compositionally biased toward basic and acidic residues: residues 221–245 and 259–276; these read PKAE…DELL and TGEH…RPQD. Residues 277 to 286 show a composition bias toward acidic residues; that stretch reads SEDMWGDEDF. Residues 295–310 show a composition bias toward low complexity; it reads VVSSEGRQSRRQSVSR. Over residues 325 to 336 the composition is skewed to polar residues; that stretch reads SKQSPPMASSPI. Basic and acidic residues predominate over residues 415–424; sequence ASKEEKEDWL. Polar residues predominate over residues 459 to 469; the sequence is SGSQPLTSTQG. Residues 473 to 482 show a composition bias toward low complexity; the sequence is AAAGGSSGTT. Coiled-coil stretches lie at residues 577–727 and 773–870; these read AELQ…VDAA and IRQR…EEQK. Residue K960 forms a Glycyl lysine isopeptide (Lys-Gly) (interchain with G-Cter in SUMO2) linkage. A disordered region spans residues 1062–1085; it reads AASSQSALMPPAPTTRWCSQPPTG.

May interact with FAS cytoplasmic domain. Interacts with PARD3. Interacts with TRAPPC14. Present in various epithelial cells (at protein level).

It is found in the cytoplasm. Its subcellular location is the cytoskeleton. The protein localises to the microtubule organizing center. It localises to the centrosome. The protein resides in the centriole. It is found in the spindle pole. Its subcellular location is the cell junction. Functionally, keratin-binding protein required for epithelial cell polarization. Involved in apical junction complex (AJC) assembly via its interaction with PARD3. Required for ciliogenesis. The sequence is that of Fas-binding factor 1 (FBF1) from Homo sapiens (Human).